Consider the following 653-residue polypeptide: Zinc finger CCCH domain-containing protein 54 (653 aa).

The segment at 242 to 261 (NGGGGGGGSPARARRSNGLS) is disordered. A C3H1-type zinc finger spans residues 260-287 (LSTRRPCHYFSKGICKNGQNCHYSHHQV). Residues 313–396 (SLETLEMEIT…GQHSVVLAED (84 aa)) enclose the HTH OST-type domain. In terms of domain architecture, RRM spans 422-497 (HQIYLTFPAE…SRVLVKPYRE (76 aa)). Positions 537 to 565 (RLMRKQLAEKREMLLEMERRRATVRRLES) form a coiled coil. A disordered region spans residues 598–623 (PSLASPDPLEIVSNSQAPPTQAGNIY). Residues 609 to 620 (VSNSQAPPTQAG) show a composition bias toward polar residues.

The sequence is that of Zinc finger CCCH domain-containing protein 54 from Oryza sativa subsp. japonica (Rice).